The sequence spans 180 residues: MQNPQNLIWIDLEMTGLDPDSDVIIEMATIVTDSELNTLAEGPVIAIHHSDEVLARMDEWNTRTHGASGLTQRVRESKVSMAEAEAQTIAFLEQWVPKGKSPICGNSICQDRRFLYRHMRNLENYFHYRNLDVSTLKELAARWAPDVRDSFKKGNTHLALDDIRESIAELRHYREHFIKL.

The Exonuclease domain occupies 7–170 (LIWIDLEMTG…DDIRESIAEL (164 aa)). The active site involves Tyr128.

It belongs to the oligoribonuclease family.

The protein resides in the cytoplasm. 3'-to-5' exoribonuclease specific for small oligoribonucleotides. This is Oligoribonuclease from Pseudomonas putida (strain ATCC 700007 / DSM 6899 / JCM 31910 / BCRC 17059 / LMG 24140 / F1).